The following is a 706-amino-acid chain: Signal transducer and activator of transcription 1 (706 aa).

Positions 477 to 574 constitute an SH2 domain; that stretch reads WCIGFISKND…EEMLRFFESE (98 aa).

This sequence belongs to the transcription factor STAT family. As to quaternary structure, forms a homodimer or a heterodimer with a related family member. Expressed in adult and larval pharynx, head ganglia, tail ganglia, ventral nerve cord and body muscles.

Its subcellular location is the cytoplasm. It is found in the nucleus. Functionally, carries out a dual function: signal transduction and activation of transcription. Activated STAT proteins play a role in repression of dauer formation. Neuronal expression is held in check by negative signals through the TGF-beta pathway that target the daf-3 transcription factor. The protein is Signal transducer and activator of transcription 1 of Caenorhabditis elegans.